A 601-amino-acid polypeptide reads, in one-letter code: Beta-phellandrene synthase (601 aa).

A chloroplast-targeting transit peptide spans 1 to 35 (MSTISIHHVGILRNPLPSKNKRALINNPWSLSLPR). Residues D356 and D360 each coordinate Mn(2+). The short motif at 356 to 360 (DDVYD) is the DDXXD motif element. Homodimerization regions lie at residues 362-368 (YGTLDEL) and 434-471 (EAEW…LSIP). D499 and E507 together coordinate Mn(2+).

Belongs to the terpene synthase family. Homodimer. It depends on Mn(2+) as a cofactor. Requires Mg(2+) as cofactor. As to expression, expressed in peltate glandular trichomes. Present at low levels in flowers and stems.

The protein resides in the plastid. The protein localises to the chloroplast. It catalyses the reaction (2E)-geranyl diphosphate = beta-phellandrene + diphosphate. It carries out the reaction (2E)-geranyl diphosphate = (1R,5R)-sabinene + diphosphate. It participates in secondary metabolite biosynthesis; terpenoid biosynthesis. Involved in the biosynthesis of phenolic monoterpenes natural products. Monoterpene synthase that catalyzes mainly the formation of olefins such as sabinene and beta-phellandrene, and minor amounts of other monoterpenes (e.g. myrcene, gamma-terpinene, alpha-thujene and alpha-pinene) from geranyl diphosphate (GPP). This Origanum vulgare (Wild marjoram) protein is Beta-phellandrene synthase.